The sequence spans 90 residues: Cell division protein CrgA (90 aa).

Positions 1–25 are disordered; the sequence is MPKARVTKNETAPVSSNPSANRTPV. Positions 9–22 are enriched in polar residues; the sequence is NETAPVSSNPSANR. The next 2 helical transmembrane spans lie at 38–58 and 67–87; these read VIMFAFMIVGLAWLIVNYLVG and LGAWNYGIGFGLMIIGLLMTM.

This sequence belongs to the CrgA family.

It localises to the cell membrane. In terms of biological role, involved in cell division. The polypeptide is Cell division protein CrgA (Corynebacterium glutamicum (strain R)).